A 454-amino-acid chain; its full sequence is L-serine dehydratase TdcG (454 aa).

It belongs to the iron-sulfur dependent L-serine dehydratase family. It depends on [4Fe-4S] cluster as a cofactor.

It carries out the reaction L-serine = pyruvate + NH4(+). It participates in amino-acid degradation; L-threonine degradation via propanoate pathway. This chain is L-serine dehydratase TdcG (tdcG), found in Escherichia coli (strain K12).